The following is a 349-amino-acid chain: Thioredoxin reductase, mitochondrial (349 aa).

The N-terminal 30 residues, Met-1–Arg-30, are a transit peptide targeting the mitochondrion. Residues Ser-41–Ala-44, Ile-70–Ala-71, Gln-75, Asn-84, Val-117, Cys-175, Asp-318, and Arg-325–Ala-327 each bind FAD. Residues Cys-172 and Cys-175 are joined by a disulfide bond.

Belongs to the class-II pyridine nucleotide-disulfide oxidoreductase family. As to quaternary structure, homodimer. The cofactor is FAD.

It localises to the mitochondrion. The enzyme catalyses [thioredoxin]-dithiol + NADP(+) = [thioredoxin]-disulfide + NADPH + H(+). The chain is Thioredoxin reductase, mitochondrial (TRR1) from Kluyveromyces lactis (strain ATCC 8585 / CBS 2359 / DSM 70799 / NBRC 1267 / NRRL Y-1140 / WM37) (Yeast).